Reading from the N-terminus, the 340-residue chain is Flap endonuclease 1 (340 aa).

Residues M1–K98 form an N-domain region. 7 residues coordinate Mg(2+): D27, D80, E152, E154, D173, D175, and D236. The tract at residues D116–S258 is I-domain.

Belongs to the XPG/RAD2 endonuclease family. FEN1 subfamily. Interacts with PCNA. PCNA stimulates the nuclease activity without altering cleavage specificity. Mg(2+) is required as a cofactor.

Its function is as follows. Structure-specific nuclease with 5'-flap endonuclease and 5'-3' exonuclease activities involved in DNA replication and repair. During DNA replication, cleaves the 5'-overhanging flap structure that is generated by displacement synthesis when DNA polymerase encounters the 5'-end of a downstream Okazaki fragment. Binds the unpaired 3'-DNA end and kinks the DNA to facilitate 5' cleavage specificity. Cleaves one nucleotide into the double-stranded DNA from the junction in flap DNA, leaving a nick for ligation. Also involved in the base excision repair (BER) pathway. Acts as a genome stabilization factor that prevents flaps from equilibrating into structures that lead to duplications and deletions. Also possesses 5'-3' exonuclease activity on nicked or gapped double-stranded DNA. The polypeptide is Flap endonuclease 1 (Nitrosopumilus maritimus (strain SCM1)).